The primary structure comprises 254 residues: Nickel import ATP-binding protein NikD (254 aa).

The 240-residue stretch at 2–241 (PQQIELRDIA…PKHAVTRSLV (240 aa)) folds into the ABC transporter domain. 36-43 (GGSGSGKS) contributes to the ATP binding site.

This sequence belongs to the ABC transporter superfamily. Nickel importer (TC 3.A.1.5.3) family. The complex is composed of two ATP-binding proteins (NikD and NikE), two transmembrane proteins (NikB and NikC) and a solute-binding protein (NikA).

Its subcellular location is the cell inner membrane. The catalysed reaction is Ni(2+)(out) + ATP + H2O = Ni(2+)(in) + ADP + phosphate + H(+). Functionally, part of the ABC transporter complex NikABCDE involved in nickel import. Responsible for energy coupling to the transport system. This chain is Nickel import ATP-binding protein NikD, found in Shigella dysenteriae serotype 1 (strain Sd197).